Consider the following 437-residue polypeptide: Tol-Pal system protein TolB (437 aa).

Residues 1 to 23 form the signal peptide; the sequence is MQKRHPIIYLLITLLIFVPVSYG.

It belongs to the TolB family. In terms of assembly, the Tol-Pal system is composed of five core proteins: the inner membrane proteins TolA, TolQ and TolR, the periplasmic protein TolB and the outer membrane protein Pal. They form a network linking the inner and outer membranes and the peptidoglycan layer.

The protein localises to the periplasm. In terms of biological role, part of the Tol-Pal system, which plays a role in outer membrane invagination during cell division and is important for maintaining outer membrane integrity. The polypeptide is Tol-Pal system protein TolB (Coxiella burnetii (strain RSA 493 / Nine Mile phase I)).